A 472-amino-acid chain; its full sequence is 3-isopropylmalate dehydratase large subunit (472 aa).

Residues C347, C407, and C410 each coordinate [4Fe-4S] cluster.

Belongs to the aconitase/IPM isomerase family. LeuC type 1 subfamily. Heterodimer of LeuC and LeuD. [4Fe-4S] cluster serves as cofactor.

The enzyme catalyses (2R,3S)-3-isopropylmalate = (2S)-2-isopropylmalate. The protein operates within amino-acid biosynthesis; L-leucine biosynthesis; L-leucine from 3-methyl-2-oxobutanoate: step 2/4. In terms of biological role, catalyzes the isomerization between 2-isopropylmalate and 3-isopropylmalate, via the formation of 2-isopropylmaleate. In Synechococcus sp. (strain WH7803), this protein is 3-isopropylmalate dehydratase large subunit.